A 399-amino-acid chain; its full sequence is Rhodopsin, G0-coupled (399 aa).

The Extracellular segment spans residues 1–17 (MPFPLNRTDTALVISPS). Asn-6 is a glycosylation site (N-linked (GlcNAc...) asparagine). A helical transmembrane segment spans residues 18 to 43 (EFRIIGIFISICCIIGVLGNLLIIIV). The Cytoplasmic segment spans residues 44–55 (FAKRRSVRRPIN). The helical transmembrane segment at 56–81 (FFVLNLAVSDLIVALLGYPMTAASAF) threads the bilayer. At 82-95 (SNRWIFDNIGCKIY) the chain is on the extracellular side. An intrachain disulfide couples Cys-92 to Cys-169. A helical membrane pass occupies residues 96–115 (AFLCFNSGVISIMTHAALSF). At 116–134 (CRYIIICQYGYRKKITQTT) the chain is on the cytoplasmic side. A helical membrane pass occupies residues 135 to 158 (VLRTLFSIWSFAMFWTLSPLFGWS). The Extracellular segment spans residues 159–182 (SYVIEVVPVSCSVNWYGHGLGDVS). A helical membrane pass occupies residues 183-210 (YTISVIVAVYVFPLSIIVFSYGMILQEK). At 211–240 (VCKDSRKNGIRAQQRYTPRFIQDIEQRVTF) the chain is on the cytoplasmic side. Residues 241–263 (ISFLMMAAFMVAWTPYAIMSALA) traverse the membrane as a helical segment. At 264-271 (IGSFNVEN) the chain is on the extracellular side. Residues 272–295 (SFAALPTLFAKASCAYNPFIYAFT) traverse the membrane as a helical segment. N6-(retinylidene)lysine is present on Lys-282. Residues 296–399 (NANFRDTVVE…NTFTADFSVI (104 aa)) are Cytoplasmic-facing.

This sequence belongs to the G-protein coupled receptor 1 family. Opsin subfamily. Phosphorylated on some or all of the serine and threonine residues present in the C-terminal region. In terms of tissue distribution, retina. Expressed in the hyperpolarizing cell layer of the photoreceptor cells with its photoreceptive region adjacent to the lens.

The protein localises to the membrane. Visual pigments are the light-absorbing molecules that mediate vision. They consist of an apoprotein, opsin, covalently linked to cis-retinal. The protein is Rhodopsin, G0-coupled (SCOP2) of Mizuhopecten yessoensis (Japanese scallop).